The chain runs to 428 residues: Enolase (428 aa).

Position 163 (Gln163) interacts with (2R)-2-phosphoglycerate. Catalysis depends on Glu205, which acts as the Proton donor. Mg(2+) contacts are provided by Asp242, Glu285, and Asp312. 4 residues coordinate (2R)-2-phosphoglycerate: Lys337, Arg366, Ser367, and Lys388. The active-site Proton acceptor is the Lys337.

The protein belongs to the enolase family. Requires Mg(2+) as cofactor.

Its subcellular location is the cytoplasm. The protein localises to the secreted. It is found in the cell surface. It catalyses the reaction (2R)-2-phosphoglycerate = phosphoenolpyruvate + H2O. It participates in carbohydrate degradation; glycolysis; pyruvate from D-glyceraldehyde 3-phosphate: step 4/5. In terms of biological role, catalyzes the reversible conversion of 2-phosphoglycerate (2-PG) into phosphoenolpyruvate (PEP). It is essential for the degradation of carbohydrates via glycolysis. The sequence is that of Enolase from Nitrosomonas eutropha (strain DSM 101675 / C91 / Nm57).